The following is a 358-amino-acid chain: UDP-N-acetylglucosamine--N-acetylmuramyl-(pentapeptide) pyrophosphoryl-undecaprenol N-acetylglucosamine transferase (358 aa).

UDP-N-acetyl-alpha-D-glucosamine contacts are provided by residues 11 to 13 (TGG), N122, R161, S189, I243, 262 to 267 (ALTVCE), and Q288.

It belongs to the glycosyltransferase 28 family. MurG subfamily.

The protein resides in the cell inner membrane. It carries out the reaction di-trans,octa-cis-undecaprenyl diphospho-N-acetyl-alpha-D-muramoyl-L-alanyl-D-glutamyl-meso-2,6-diaminopimeloyl-D-alanyl-D-alanine + UDP-N-acetyl-alpha-D-glucosamine = di-trans,octa-cis-undecaprenyl diphospho-[N-acetyl-alpha-D-glucosaminyl-(1-&gt;4)]-N-acetyl-alpha-D-muramoyl-L-alanyl-D-glutamyl-meso-2,6-diaminopimeloyl-D-alanyl-D-alanine + UDP + H(+). It participates in cell wall biogenesis; peptidoglycan biosynthesis. Functionally, cell wall formation. Catalyzes the transfer of a GlcNAc subunit on undecaprenyl-pyrophosphoryl-MurNAc-pentapeptide (lipid intermediate I) to form undecaprenyl-pyrophosphoryl-MurNAc-(pentapeptide)GlcNAc (lipid intermediate II). The polypeptide is UDP-N-acetylglucosamine--N-acetylmuramyl-(pentapeptide) pyrophosphoryl-undecaprenol N-acetylglucosamine transferase (Coxiella burnetii (strain CbuK_Q154) (Coxiella burnetii (strain Q154))).